The sequence spans 60 residues: Metallothionein B (60 aa).

Residues 1-28 form a beta region; the sequence is MDPCECSKTGSCNCGGSCKCSNCACTSC. The a divalent metal cation site is built by Cys-4, Cys-6, Cys-12, Cys-14, Cys-18, Cys-20, Cys-23, Cys-25, Cys-28, Cys-32, Cys-33, Cys-35, Cys-36, Cys-40, Cys-43, Cys-47, Cys-49, Cys-54, Cys-58, and Cys-59. The alpha stretch occupies residues 29–60; it reads KKSCCPCCPSDCSKCASGCVCKGKTCDTSCCQ.

It belongs to the metallothionein superfamily. Type 1 family.

Its function is as follows. Metallothioneins have a high content of cysteine residues that bind various heavy metals. This is Metallothionein B (mtb) from Oncorhynchus mykiss (Rainbow trout).